Reading from the N-terminus, the 145-residue chain is Basic phospholipase A2 S6-45 (145 aa).

A signal peptide spans 1–19; it reads MYPAHLLVLLAVCVSLLGA. The propeptide occupies 20 to 27; that stretch reads SDIPPQPL. 7 disulfides stabilise this stretch: C38-C99, C54-C144, C56-C72, C71-C127, C78-C120, C88-C113, and C106-C118. Residues Y55, G57, and G59 each coordinate Ca(2+). Residue H75 is part of the active site. Residue D76 participates in Ca(2+) binding. D121 is an active-site residue.

Belongs to the phospholipase A2 family. Group I subfamily. D49 sub-subfamily. It depends on Ca(2+) as a cofactor. In terms of tissue distribution, expressed by the venom gland.

Its subcellular location is the secreted. It carries out the reaction a 1,2-diacyl-sn-glycero-3-phosphocholine + H2O = a 1-acyl-sn-glycero-3-phosphocholine + a fatty acid + H(+). In terms of biological role, snake venom phospholipase A2 (PLA2) that inhibits collagen-induced platelet aggregation. PLA2 catalyzes the calcium-dependent hydrolysis of the 2-acyl groups in 3-sn-phosphoglycerides. This is Basic phospholipase A2 S6-45 from Austrelaps superbus (Lowland copperhead snake).